Here is a 222-residue protein sequence, read N- to C-terminus: MGSCGNSPSLLWLLLADIINKKKDLVYNFDYLQKIHELEMNYFDFVIEKVRLKDTDNHVKITVEKMLDVLKLLLEYTQDQNYQKEIDSCKKYLTDDNPVNPSDDLTEDMLEDDTSREIYLLEFTYGRNQCQYAYSLIQKVEIELANINTLYSTVRSMFYNTMKYIFSSIDYVEVCPENAFKLMINYYENDRNHIAHSLQRKTIKEVRPSQQAITMWFNFGIY.

Residue glycine 2 is the site of N-myristoyl glycine; by host attachment.

It belongs to the mimivirus R683/R861 family.

This is an uncharacterized protein from Acanthamoeba polyphaga mimivirus (APMV).